Here is a 310-residue protein sequence, read N- to C-terminus: N-acetyl-gamma-glutamyl-phosphate reductase (310 aa).

The active site involves Cys-117.

This sequence belongs to the NAGSA dehydrogenase family. Type 2 subfamily.

Its subcellular location is the cytoplasm. It carries out the reaction N-acetyl-L-glutamate 5-semialdehyde + phosphate + NADP(+) = N-acetyl-L-glutamyl 5-phosphate + NADPH + H(+). It functions in the pathway amino-acid biosynthesis; L-arginine biosynthesis; N(2)-acetyl-L-ornithine from L-glutamate: step 3/4. In terms of biological role, catalyzes the NADPH-dependent reduction of N-acetyl-5-glutamyl phosphate to yield N-acetyl-L-glutamate 5-semialdehyde. The sequence is that of N-acetyl-gamma-glutamyl-phosphate reductase from Rhizobium rhizogenes (strain K84 / ATCC BAA-868) (Agrobacterium radiobacter).